A 308-amino-acid chain; its full sequence is Porphobilinogen deaminase (308 aa).

Position 240 is an S-(dipyrrolylmethanemethyl)cysteine (C240).

It belongs to the HMBS family. In terms of assembly, monomer. Dipyrromethane is required as a cofactor.

The catalysed reaction is 4 porphobilinogen + H2O = hydroxymethylbilane + 4 NH4(+). It participates in porphyrin-containing compound metabolism; protoporphyrin-IX biosynthesis; coproporphyrinogen-III from 5-aminolevulinate: step 2/4. Functionally, tetrapolymerization of the monopyrrole PBG into the hydroxymethylbilane pre-uroporphyrinogen in several discrete steps. The protein is Porphobilinogen deaminase of Desulfitobacterium hafniense (strain DSM 10664 / DCB-2).